Consider the following 389-residue polypeptide: GTPase Obg (389 aa).

The 159-residue stretch at 1–159 (MKFVDEAVIR…RSLKLELLLL (159 aa)) folds into the Obg domain. The OBG-type G domain maps to 160–333 (ADVGLLGMPN…LALKLLDYIA (174 aa)). GTP-binding positions include 166–173 (GMPNAGKS), 191–195 (FTTLV), 213–216 (DIPG), 283–286 (NKTD), and 314–316 (SAY). Ser173 and Thr193 together coordinate Mg(2+).

It belongs to the TRAFAC class OBG-HflX-like GTPase superfamily. OBG GTPase family. Monomer. It depends on Mg(2+) as a cofactor.

It is found in the cytoplasm. Functionally, an essential GTPase which binds GTP, GDP and possibly (p)ppGpp with moderate affinity, with high nucleotide exchange rates and a fairly low GTP hydrolysis rate. Plays a role in control of the cell cycle, stress response, ribosome biogenesis and in those bacteria that undergo differentiation, in morphogenesis control. This chain is GTPase Obg, found in Shewanella baltica (strain OS223).